Consider the following 376-residue polypeptide: S-adenosylmethionine synthase (376 aa).

His15 contacts ATP. Mg(2+) is bound at residue Asp17. Glu43 is a K(+) binding site. Positions 56 and 92 each coordinate L-methionine. The segment at 92–102 (QSKEIANQVDR) is flexible loop. ATP is bound by residues 156 to 158 (DMK), Asp231, 237 to 238 (RK), Ala254, and Lys258. Asp231 is a binding site for L-methionine. Lys262 contacts L-methionine.

This sequence belongs to the AdoMet synthase family. In terms of assembly, homotetramer; dimer of dimers. Requires Mg(2+) as cofactor. K(+) serves as cofactor.

It localises to the cytoplasm. The enzyme catalyses L-methionine + ATP + H2O = S-adenosyl-L-methionine + phosphate + diphosphate. It functions in the pathway amino-acid biosynthesis; S-adenosyl-L-methionine biosynthesis; S-adenosyl-L-methionine from L-methionine: step 1/1. Its function is as follows. Catalyzes the formation of S-adenosylmethionine (AdoMet) from methionine and ATP. The overall synthetic reaction is composed of two sequential steps, AdoMet formation and the subsequent tripolyphosphate hydrolysis which occurs prior to release of AdoMet from the enzyme. The protein is S-adenosylmethionine synthase of Mycoplasmopsis pulmonis (strain UAB CTIP) (Mycoplasma pulmonis).